The following is a 1939-amino-acid chain: Myosin-8 (1939 aa).

Residues 35–84 (DAKTSVFVAEPKASYVKSTIQSKEGGKVTVKTEGGATLTVREDQVFPMNP) form the Myosin N-terminal SH3-like domain. Thr-66 and Thr-71 each carry phosphothreonine. In terms of domain architecture, Myosin motor spans 88 to 783 (DKIEDMAMMT…LLGLLEEMRD (696 aa)). N6,N6,N6-trimethyllysine is present on Lys-132. 181–188 (GESGAGKT) contacts ATP. Residue Tyr-391 is modified to Phosphotyrosine. Thr-421 bears the Phosphothreonine mark. Position 426 is a phosphotyrosine (Tyr-426). Phosphoserine is present on Ser-627. The segment at 660–682 (LNKLMTNLRSTHPHFVRCIIPNE) is actin-binding. His-758 is modified (pros-methylhistidine). The actin-binding stretch occupies residues 762-776 (KFGHTKVFFKAGLLG). The region spanning 783-815 (DEKLSQIITRTQAVCRGFLMRVEYQKMLQRREA) is the IQ domain. The stretch at 844-1939 (LLKSAETEKE…REVHTKISAE (1096 aa)) forms a coiled coil. Phosphoserine occurs at positions 1093, 1097, 1163, and 1238. Residue Thr-1242 is modified to Phosphothreonine. A Phosphoserine modification is found at Ser-1244. Position 1256 is a phosphothreonine (Thr-1256). At Ser-1262 the chain carries Phosphoserine. Thr-1266 and Thr-1287 each carry phosphothreonine. A phosphoserine mark is found at Ser-1293, Ser-1304, and Ser-1307. Tyr-1465 carries the phosphotyrosine modification. The residue at position 1468 (Thr-1468) is a Phosphothreonine. A Phosphoserine modification is found at Ser-1475. Tyr-1493 is subject to Phosphotyrosine. Residue Ser-1496 is modified to Phosphoserine. Residue Thr-1502 is modified to Phosphothreonine. Ser-1515 carries the phosphoserine modification. Residue Thr-1518 is modified to Phosphothreonine. Residues Ser-1555, Ser-1575, Ser-1601, Ser-1604, Ser-1715, and Ser-1727 each carry the phosphoserine modification. Thr-1731 is subject to Phosphothreonine. Ser-1740 carries the post-translational modification Phosphoserine.

It belongs to the TRAFAC class myosin-kinesin ATPase superfamily. Myosin family. As to quaternary structure, muscle myosin is a hexameric protein that consists of 2 heavy chain subunits (MHC), 2 alkali light chain subunits (MLC) and 2 regulatory light chain subunits (MLC-2).

It is found in the cytoplasm. Its subcellular location is the myofibril. Muscle contraction. The polypeptide is Myosin-8 (MYH8) (Canis lupus familiaris (Dog)).